The following is a 43-amino-acid chain: MQNATLISVFVASLVIGITAYAIFVSFGPSARNLRDPFEEHED.

Residues 5-25 traverse the membrane as a helical segment; it reads TLISVFVASLVIGITAYAIFV.

This sequence belongs to the PsbN family.

It localises to the plastid. Its subcellular location is the chloroplast thylakoid membrane. In terms of biological role, may play a role in photosystem I and II biogenesis. The polypeptide is Protein PsbN (Cyanidioschyzon merolae (strain NIES-3377 / 10D) (Unicellular red alga)).